The following is an 86-amino-acid chain: Large ribosomal subunit protein bL27 (86 aa).

Residues 1–10 (MAQKKGGGST) are compositionally biased toward gly residues. Residues 1 to 21 (MAQKKGGGSTRNGRDSESKRL) are disordered.

This sequence belongs to the bacterial ribosomal protein bL27 family.

This chain is Large ribosomal subunit protein bL27, found in Ralstonia nicotianae (strain ATCC BAA-1114 / GMI1000) (Ralstonia solanacearum).